A 679-amino-acid polypeptide reads, in one-letter code: DNA ligase (679 aa).

NAD(+) is bound by residues 41 to 45, 90 to 91, and E120; these read DSVYD and SL. The active-site N6-AMP-lysine intermediate is K122. NAD(+) is bound by residues R143, E177, K293, and K317. The Zn(2+) site is built by C411, C414, C429, and C434. The BRCT domain occupies 597-679; it reads DSNSWFAGKR…SETMREDAQA (83 aa).

Belongs to the NAD-dependent DNA ligase family. LigA subfamily. Mg(2+) serves as cofactor. It depends on Mn(2+) as a cofactor.

It carries out the reaction NAD(+) + (deoxyribonucleotide)n-3'-hydroxyl + 5'-phospho-(deoxyribonucleotide)m = (deoxyribonucleotide)n+m + AMP + beta-nicotinamide D-nucleotide.. Functionally, DNA ligase that catalyzes the formation of phosphodiester linkages between 5'-phosphoryl and 3'-hydroxyl groups in double-stranded DNA using NAD as a coenzyme and as the energy source for the reaction. It is essential for DNA replication and repair of damaged DNA. This is DNA ligase from Lactiplantibacillus plantarum (strain ATCC BAA-793 / NCIMB 8826 / WCFS1) (Lactobacillus plantarum).